Here is a 197-residue protein sequence, read N- to C-terminus: NADH-quinone oxidoreductase subunit C (197 aa).

It belongs to the complex I 30 kDa subunit family. NDH-1 is composed of 14 different subunits. Subunits NuoB, C, D, E, F, and G constitute the peripheral sector of the complex.

The protein localises to the cell inner membrane. It carries out the reaction a quinone + NADH + 5 H(+)(in) = a quinol + NAD(+) + 4 H(+)(out). In terms of biological role, NDH-1 shuttles electrons from NADH, via FMN and iron-sulfur (Fe-S) centers, to quinones in the respiratory chain. The immediate electron acceptor for the enzyme in this species is believed to be ubiquinone. Couples the redox reaction to proton translocation (for every two electrons transferred, four hydrogen ions are translocated across the cytoplasmic membrane), and thus conserves the redox energy in a proton gradient. This is NADH-quinone oxidoreductase subunit C from Neisseria gonorrhoeae (strain ATCC 700825 / FA 1090).